The chain runs to 76 residues: Exodeoxyribonuclease 7 small subunit (76 aa).

Belongs to the XseB family. In terms of assembly, heterooligomer composed of large and small subunits.

It is found in the cytoplasm. The catalysed reaction is Exonucleolytic cleavage in either 5'- to 3'- or 3'- to 5'-direction to yield nucleoside 5'-phosphates.. In terms of biological role, bidirectionally degrades single-stranded DNA into large acid-insoluble oligonucleotides, which are then degraded further into small acid-soluble oligonucleotides. This chain is Exodeoxyribonuclease 7 small subunit, found in Staphylococcus haemolyticus (strain JCSC1435).